We begin with the raw amino-acid sequence, 338 residues long: Sorting nexin-15 (338 aa).

The region spanning 1–131 (MSRRAKKDDF…EFFRGGEVTR (131 aa)) is the PX domain. Positions 52, 54, 88, and 97 each coordinate a 1,2-diacyl-sn-glycero-3-phospho-(1D-myo-inositol-3-phosphate). Arg106 is subject to Omega-N-methylarginine. The interval 134–155 (EVSRDLQILPPPLIPTPPSDEA) is disordered. The segment covering 142–151 (LPPPLIPTPP) has biased composition (pro residues). Phosphoserine occurs at positions 202 and 228. The disordered stretch occupies residues 240-270 (VQSKRLDQEPWEPGGREEEEAEDGDPAPAYL). In terms of domain architecture, MIT spans 266 to 338 (APAYLGQATE…RAETLHAHLP (73 aa)).

This sequence belongs to the sorting nexin family. In terms of assembly, homodimer. Interacts with SNX1, SNX2 and SNX4.

It localises to the cytoplasm. It is found in the membrane. The protein resides in the cytoplasmic vesicle membrane. Its function is as follows. May be involved in several stages of intracellular trafficking. Overexpression of SNX15 disrupts the normal trafficking of proteins from the plasma membrane to recycling endosomes or the TGN. The sequence is that of Sorting nexin-15 (Snx15) from Rattus norvegicus (Rat).